We begin with the raw amino-acid sequence, 328 residues long: m7GpppN-mRNA hydrolase NUDT17 (328 aa).

The region spanning 90–236 is the Nudix hydrolase domain; the sequence is GVDLGVAVIL…DGTETPGLLP (147 aa). A Nudix box motif is present at residues 127 to 148; it reads GHVELEEELLDGGLRELWEESG. Residues E142 and E146 each coordinate Mg(2+). The tract at residues 299–328 is disordered; the sequence is PCKSAAYLDPGPAKEEWNMDPLPPNQGSGK.

The protein belongs to the Nudix hydrolase family. It depends on Mg(2+) as a cofactor. Requires Mn(2+) as cofactor.

The enzyme catalyses a 5'-end (N(7)-methyl 5'-triphosphoguanosine)-ribonucleoside in mRNA + H2O = N(7)-methyl-GDP + a 5'-end phospho-ribonucleoside in mRNA + 2 H(+). Functionally, acts as a decapping enzyme capable of hydrolyzing monomethylated capped RNAs (in vitro). Hydrolyzes monomethylated capped RNA after alpha and beta phosphates to form N(7)-methyl-GDP. Shows low activity towards unmethylated capped RNA. In Homo sapiens (Human), this protein is m7GpppN-mRNA hydrolase NUDT17 (NUDT17).